A 181-amino-acid chain; its full sequence is Probable RNA 2'-phosphotransferase (181 aa).

Belongs to the KptA/TPT1 family.

Removes the 2'-phosphate from RNA via an intermediate in which the phosphate is ADP-ribosylated by NAD followed by a presumed transesterification to release the RNA and generate ADP-ribose 1''-2''-cyclic phosphate (APPR&gt;P). May function as an ADP-ribosylase. This is Probable RNA 2'-phosphotransferase from Acaryochloris marina (strain MBIC 11017).